Here is a 608-residue protein sequence, read N- to C-terminus: Serine/threonine-protein kinase ROP17 (608 aa).

A signal peptide spans 1 to 21 (MELVLCFVIITISGVIRESSA). Residue asparagine 76 is glycosylated (N-linked (GlcNAc...) asparagine). The 297-residue stretch at 283-579 (LKKRGFLGGG…QQALEQFSLL (297 aa)) folds into the Protein kinase domain. ATP is bound by residues 289 to 297 (LGGGGFGLV) and lysine 312. The Proton acceptor role is filled by aspartate 436.

It belongs to the protein kinase superfamily. Ser/Thr protein kinase family. As to quaternary structure, interacts with ROP5; interaction with ROP5 does not affect kinase activity. Interacts with human BCL2; the interaction probably promotes BCL2 phosphorylation and degradation.

It is found in the secreted. Its subcellular location is the cytoplasmic vesicle. The protein resides in the secretory vesicle. It localises to the rhoptry. The protein localises to the parasitophorous vacuole membrane. It catalyses the reaction L-threonyl-[protein] + ATP = O-phospho-L-threonyl-[protein] + ADP + H(+). It carries out the reaction L-seryl-[protein] + ATP = O-phospho-L-seryl-[protein] + ADP + H(+). In terms of biological role, protein kinase. Virulence factor. Promotes migration of Toxoplasma-infected macrophages through collagen matrix, facilitating parasite transport through tissues and systemic dissemination. Plays a role in the translocation of dense granule effectors, such as GRA16 and GRA24, across the parasitophorous vacuole membrane in Toxoplasma-infected host cells. Phosphorylates mouse IRGB6 (TGTP1/TGTP2), an immunity-related GTPase (IRG) that protects mice from infection by certain intracellular pathogens; the phosphorylation leads to the disassembly of IRGB6 polymers into monomers and dimers. May modulate gene expression in human cells. Promotes autophagy in human cells via modulation of the BCL2-BECN1 pathway. The chain is Serine/threonine-protein kinase ROP17 from Toxoplasma gondii.